The primary structure comprises 461 residues: Gram-negative bacteria-binding protein 2 (461 aa).

Positions 1-20 (MRWEFLPCLLLLISNNKIFG) are cleaved as a signal peptide. Residues 21–115 (FKVPSINFEM…TRVIINTRLL (95 aa)) enclose the CBM39 domain. N-linked (GlcNAc...) asparagine glycosylation is found at Asn-71, Asn-170, Asn-177, and Asn-364. Residues 179 to 461 (TTWKHDIRQR…VIDYVRVYAE (283 aa)) form the GH16 domain.

The protein belongs to the insect beta-1,3-glucan binding protein family.

The protein localises to the secreted. Functionally, involved in the recognition of invading microorganisms. Binds specifically to beta-1,3-glucan and activates the phenoloxidase cascade. This chain is Gram-negative bacteria-binding protein 2, found in Drosophila melanogaster (Fruit fly).